We begin with the raw amino-acid sequence, 377 residues long: NADH dehydrogenase [ubiquinone] 1 alpha subcomplex subunit 9, mitochondrial (377 aa).

Residues 1-35 (MAAAVRFQVVRALPMSRPAISAAATSVFCSSSHRQ) constitute a mitochondrion transit peptide. An N6-succinyllysine modification is found at lysine 175. An N6-acetyllysine mark is found at lysine 189 and lysine 370.

This sequence belongs to the complex I NDUFA9 subunit family. As to quaternary structure, complex I is composed of 45 different subunits. This a component of the hydrophobic protein fraction. Interacts with BLOC1S1. Interacts with SLC2A4. Interacts with CLOCK. Interacts with RAB5IF. FAD is required as a cofactor. In terms of processing, acetylated on lysine residues. BLOC1S1 is required for acetylation. Acetylated by CLOCK in a circadian manner. As to expression, expressed by the principal cells of the epididymis. Detected in flagella of epididymal sperm (at protein level).

Its subcellular location is the mitochondrion matrix. Accessory subunit of the mitochondrial membrane respiratory chain NADH dehydrogenase (Complex I), that is believed not to be involved in catalysis. Complex I functions in the transfer of electrons from NADH to the respiratory chain. The immediate electron acceptor for the enzyme is believed to be ubiquinone. The sequence is that of NADH dehydrogenase [ubiquinone] 1 alpha subcomplex subunit 9, mitochondrial from Rattus norvegicus (Rat).